Consider the following 303-residue polypeptide: AP2-like ethylene-responsive transcription factor At1g79700 (303 aa).

The span at methionine 1–lysine 10 shows a compositional bias: basic residues. The tract at residues methionine 1 to glycine 55 is disordered. Polar residues predominate over residues lysine 20 to leucine 32. 2 consecutive DNA-binding regions (AP2/ERF) follow at residues proline 52–proline 118 and lysine 154–aspartate 202. The interval alanine 212 to serine 259 is disordered. Over residues aspartate 214–glutamate 243 the composition is skewed to basic and acidic residues.

The protein belongs to the AP2/ERF transcription factor family. AP2 subfamily.

The protein resides in the nucleus. In terms of biological role, probably acts as a transcriptional activator. Binds to the GCC-box pathogenesis-related promoter element. May be involved in the regulation of gene expression by stress factors and by components of stress signal transduction pathways. In Arabidopsis thaliana (Mouse-ear cress), this protein is AP2-like ethylene-responsive transcription factor At1g79700.